A 115-amino-acid chain; its full sequence is Large ribosomal subunit protein uL22 (115 aa).

Belongs to the universal ribosomal protein uL22 family. Part of the 50S ribosomal subunit.

Its function is as follows. This protein binds specifically to 23S rRNA; its binding is stimulated by other ribosomal proteins, e.g. L4, L17, and L20. It is important during the early stages of 50S assembly. It makes multiple contacts with different domains of the 23S rRNA in the assembled 50S subunit and ribosome. The globular domain of the protein is located near the polypeptide exit tunnel on the outside of the subunit, while an extended beta-hairpin is found that lines the wall of the exit tunnel in the center of the 70S ribosome. In Limosilactobacillus fermentum (strain NBRC 3956 / LMG 18251) (Lactobacillus fermentum), this protein is Large ribosomal subunit protein uL22.